The sequence spans 65 residues: Hainantoxin-X (65 aa).

The first 20 residues, 1–20 (MNMKILVLVAVLCLVVSTHA), serve as a signal peptide directing secretion. The propeptide occupies 21–37 (ERHSKTDMEDSPMIQER). 3 cysteine pairs are disulfide-bonded: Cys-39/Cys-56, Cys-46/Cys-59, and Cys-55/Cys-64.

Belongs to the neurotoxin 36 family. 02 subfamily. In terms of tissue distribution, expressed by the venom gland.

Its subcellular location is the secreted. Its function is as follows. Reversibly blocks N-type calcium channels (Cav2.2/CACNA1B) in rat dorsal root ganglion cells. Elicits no toxic symptoms in either vertebrates or invertebrates during a period of 48 hours post-injection, when it was assayed in vivo by direct injection into mice and cockroaches. The sequence is that of Hainantoxin-X from Cyriopagopus hainanus (Chinese bird spider).